We begin with the raw amino-acid sequence, 80 residues long: FXYD domain-containing ion transport regulator 7 (80 aa).

Topologically, residues 1–22 (MATPTQSPTNVPEETDPFFYDY) are extracellular. O-linked (GlcNAc) threonine glycosylation is found at Thr3, Thr5, and Thr9. The helical transmembrane segment at 23–45 (ATVQTVGMTLATIMFVLGIIIIL) threads the bilayer. At 46 to 80 (SKKVKCRKADSRSESPTCKSCKSELPSSAPGGGGV) the chain is on the cytoplasmic side. A disordered region spans residues 55-80 (DSRSESPTCKSCKSELPSSAPGGGGV). Position 73 is a phosphoserine (Ser73).

The protein belongs to the FXYD family. As to quaternary structure, regulatory subunit of the sodium/potassium-transporting ATPase which is composed of a catalytic alpha subunit, a non-catalytic beta subunit and an additional regulatory subunit. The regulatory subunit, a member of the FXYD protein family, modulates the enzymatic activity in a tissue- and isoform-specific way by changing affinities of the Na+/K+-ATPase toward Na(+), K(+) or ATP. O-glycosylated; required for stabilization and translocation to the plasma membrane.

The protein localises to the cell membrane. Its function is as follows. Associates with and regulates the activity of the sodium/potassium-transporting ATPase (NKA) which catalyzes the hydrolysis of ATP coupled with the exchange of Na(+) and K(+) ions across the plasma membrane. Reduces the apparent affinity for external K(+), an effect that depends on the presence of external Na(+) and voltage. Increases the apparent affinity for intracellular Na(+). In Mus musculus (Mouse), this protein is FXYD domain-containing ion transport regulator 7 (Fxyd7).